Consider the following 373-residue polypeptide: Innexin shaking-B (373 aa).

The Cytoplasmic portion of the chain corresponds to 1–21 (MLDIFRGLKSLVKISHVNTDS). The chain crosses the membrane as a helical span at residues 22–42 (PVFRLHYSITVIILMSFSLIV). Residues 43-106 (TTRQYVGNPI…SAEATAADKK (64 aa)) lie on the Extracellular side of the membrane. A helical membrane pass occupies residues 107–127 (IYKYYQWVCFCLFFQAILFYT). Residues 128–176 (PRWLWKSWEGGKIHALMMDLDIGICSEIEKKQKKKLLLDYLWDNLRYHN) are Cytoplasmic-facing. The chain crosses the membrane as a helical span at residues 177-199 (WWAYRYYVCEFLSLCNVIGQMFL). Topologically, residues 200 to 268 (MNRFFDGEFM…ILPLNVVNEK (69 aa)) are extracellular. Residues 269–289 (IYIFLWFWFIILTILTTLTIF) form a helical membrane-spanning segment. Residues 290-373 (YRIIIIFSPR…PGMKGEIQDA (84 aa)) are Cytoplasmic-facing.

It belongs to the pannexin family. As to quaternary structure, monomer.

The protein localises to the cell membrane. Its subcellular location is the cell junction. The protein resides in the gap junction. Structural component of the gap junctions at electrical synapses in distal and mid-depth levels in the lamina. The chain is Innexin shaking-B from Anopheles gambiae (African malaria mosquito).